Reading from the N-terminus, the 759-residue chain is Hormone-sensitive lipase (759 aa).

Residues 349–351 (HGG) carry the Involved in the stabilization of the negatively charged intermediate by the formation of the oxyanion hole motif. Ser423 is a catalytic residue. The tract at residues 534 to 553 (GRKPQKTTSPTAESVRPTES) is disordered. Ser557 carries the phosphoserine modification. Ser559 is subject to Phosphoserine; by AMPK. A Phosphothreonine modification is found at Thr574. The disordered stretch occupies residues 583–604 (LSNSEPSDSPEMSQSMETLGPS). The segment covering 585–604 (NSEPSDSPEMSQSMETLGPS) has biased composition (polar residues). A phosphoserine mark is found at Ser597, Ser618, Ser650, and Ser651. Active-site residues include Asp694 and His724.

It belongs to the 'GDXG' lipolytic enzyme family. In terms of assembly, monomer and homodimer. Interacts with CAVIN1 in the adipocyte cytoplasm. Interacts with PLIN5. In terms of processing, phosphorylation by AMPK reduces its translocation towards the lipid droplets.

It localises to the cell membrane. The protein localises to the membrane. Its subcellular location is the caveola. The protein resides in the cytoplasm. It is found in the cytosol. It localises to the lipid droplet. It catalyses the reaction a diacylglycerol + H2O = a monoacylglycerol + a fatty acid + H(+). The enzyme catalyses a triacylglycerol + H2O = a diacylglycerol + a fatty acid + H(+). The catalysed reaction is a monoacylglycerol + H2O = glycerol + a fatty acid + H(+). It carries out the reaction Hydrolyzes glycerol monoesters of long-chain fatty acids.. It catalyses the reaction cholesteryl (9Z-octadecenoate) + H2O = cholesterol + (9Z)-octadecenoate + H(+). The enzyme catalyses all-trans-retinyl hexadecanoate + H2O = all-trans-retinol + hexadecanoate + H(+). The catalysed reaction is 1,2-di-(9Z-octadecenoyl)-glycerol + H2O = (9Z-octadecenoyl)-glycerol + (9Z)-octadecenoate + H(+). It carries out the reaction 2-(5Z,8Z,11Z,14Z-eicosatetraenoyl)-glycerol + H2O = glycerol + (5Z,8Z,11Z,14Z)-eicosatetraenoate + H(+). It catalyses the reaction 1-(9Z-octadecenoyl)-glycerol + H2O = glycerol + (9Z)-octadecenoate + H(+). The enzyme catalyses 2-(9Z-octadecenoyl)-glycerol + H2O = glycerol + (9Z)-octadecenoate + H(+). The catalysed reaction is 1-O-hexadecyl-2-acetyl-sn-glycerol + H2O = 1-O-hexadecyl-sn-glycerol + acetate + H(+). It carries out the reaction 1,2-di-(9Z-octadecenoyl)-sn-glycerol + H2O = (9Z-octadecenoyl)-glycerol + (9Z)-octadecenoate + H(+). It catalyses the reaction 1,3-di-(9Z-octadecenoyl)-glycerol + H2O = 1-(9Z-octadecenoyl)-glycerol + (9Z)-octadecenoate + H(+). The enzyme catalyses 1,2-di-(9Z-octadecenoyl)-glycerol + (9Z)-octadecenoate + H(+) = 1,2,3-tri-(9Z-octadecenoyl)-glycerol + H2O. The catalysed reaction is 2,3-di-(9Z)-octadecenoyl-sn-glycerol + H2O = 2-(9Z-octadecenoyl)-glycerol + (9Z)-octadecenoate + H(+). It carries out the reaction 1,2,3-tri-(9Z-octadecenoyl)-glycerol + H2O = di-(9Z)-octadecenoylglycerol + (9Z)-octadecenoate + H(+). It catalyses the reaction 1,2-di-(9Z-octadecenoyl)-glycerol + H2O = 2-(9Z-octadecenoyl)-glycerol + (9Z)-octadecenoate + H(+). It functions in the pathway glycerolipid metabolism; triacylglycerol degradation. Lipase with broad substrate specificity, catalyzing the hydrolysis of triacylglycerols (TAGs), diacylglycerols (DAGs), monoacylglycerols (MAGs), cholesteryl esters and retinyl esters. Shows a preferential hydrolysis of DAGs over TAGs and MAGs and of the fatty acid (FA) esters at the sn-1 and sn-2 positions of the glycerol backbone in TAGs. Preferentially hydrolyzes FA esters at the sn-3 position of the glycerol backbone in DAGs. Catalyzes the hydrolysis of 2-arachidonoylglycerol, an endocannabinoid and of 2-acetyl monoalkylglycerol ether, the penultimate precursor of the pathway for de novo synthesis of platelet-activating factor. In adipose tissue and heart, it primarily hydrolyzes stored triglycerides to free fatty acids, while in steroidogenic tissues, it principally converts cholesteryl esters to free cholesterol for steroid hormone production. In Mus musculus (Mouse), this protein is Hormone-sensitive lipase (Lipe).